The following is a 403-amino-acid chain: Nucleolar protein 13 (403 aa).

Composition is skewed to basic and acidic residues over residues 1–35 (MSET…RKAE) and 75–97 (KSIE…KDAQ). 2 disordered regions span residues 1–43 (MSET…IDLK) and 72–116 (IDPK…EVVK). An N-acetylserine modification is found at Ser2. Ser2 carries the post-translational modification Phosphoserine. Polar residues predominate over residues 99-108 (EESTINTPTG). At Thr105 the chain carries Phosphothreonine. RRM domains follow at residues 125-219 (YGVW…DSEN) and 239-317 (RILF…YGED). Over residues 313 to 329 (EYGEDRSKRQVRKKVEN) the composition is skewed to basic and acidic residues. A disordered region spans residues 313 to 403 (EYGEDRSKRQ…PSQGKKVKFD (91 aa)). Residues 330 to 344 (VSRNNSSSFDISNNK) are compositionally biased toward polar residues. Ser335 carries the post-translational modification Phosphoserine. The span at 345–361 (GYDRAGQDNGSKPEYKR) shows a compositional bias: basic and acidic residues. Polar residues predominate over residues 371–381 (DSNNRTKSSVA).

The protein localises to the nucleus. It is found in the nucleolus. This Saccharomyces cerevisiae (strain ATCC 204508 / S288c) (Baker's yeast) protein is Nucleolar protein 13 (NOP13).